We begin with the raw amino-acid sequence, 202 residues long: N-(5'-phosphoribosyl)anthranilate isomerase (202 aa).

Belongs to the TrpF family.

It catalyses the reaction N-(5-phospho-beta-D-ribosyl)anthranilate = 1-(2-carboxyphenylamino)-1-deoxy-D-ribulose 5-phosphate. It functions in the pathway amino-acid biosynthesis; L-tryptophan biosynthesis; L-tryptophan from chorismate: step 3/5. The protein is N-(5'-phosphoribosyl)anthranilate isomerase of Listeria monocytogenes serotype 4a (strain HCC23).